Reading from the N-terminus, the 362-residue chain is 3-dehydroquinate synthase (362 aa).

Residues 72–77, 106–110, 130–131, lysine 143, and lysine 152 each bind NAD(+); these read DGEAHK, GVIGD, and TT. The Zn(2+) site is built by glutamate 185, histidine 248, and histidine 265.

It belongs to the sugar phosphate cyclases superfamily. Dehydroquinate synthase family. Co(2+) serves as cofactor. Zn(2+) is required as a cofactor. Requires NAD(+) as cofactor.

It is found in the cytoplasm. It catalyses the reaction 7-phospho-2-dehydro-3-deoxy-D-arabino-heptonate = 3-dehydroquinate + phosphate. Its pathway is metabolic intermediate biosynthesis; chorismate biosynthesis; chorismate from D-erythrose 4-phosphate and phosphoenolpyruvate: step 2/7. Catalyzes the conversion of 3-deoxy-D-arabino-heptulosonate 7-phosphate (DAHP) to dehydroquinate (DHQ). The sequence is that of 3-dehydroquinate synthase from Laribacter hongkongensis (strain HLHK9).